Here is a 178-residue protein sequence, read N- to C-terminus: Large ribosomal subunit protein uL6 (178 aa).

It belongs to the universal ribosomal protein uL6 family. In terms of assembly, part of the 50S ribosomal subunit.

This protein binds to the 23S rRNA, and is important in its secondary structure. It is located near the subunit interface in the base of the L7/L12 stalk, and near the tRNA binding site of the peptidyltransferase center. The sequence is that of Large ribosomal subunit protein uL6 from Halobacterium salinarum (strain ATCC 700922 / JCM 11081 / NRC-1) (Halobacterium halobium).